The primary structure comprises 395 residues: S-adenosylmethionine synthase 2 (395 aa).

Residue Glu-9 coordinates Mg(2+). His-15 is an ATP binding site. Glu-43 contributes to the K(+) binding site. Residues Glu-56 and Gln-99 each coordinate L-methionine. ATP is bound by residues 167–169 (DGK), 235–238 (SGRF), Asp-246, 252–253 (RK), Ala-269, Lys-273, and Lys-277. Asp-246 is a binding site for L-methionine. Lys-277 provides a ligand contact to L-methionine.

Belongs to the AdoMet synthase family. In terms of assembly, homotetramer. Requires Mn(2+) as cofactor. Mg(2+) serves as cofactor. The cofactor is Co(2+). It depends on K(+) as a cofactor.

It localises to the cytoplasm. It carries out the reaction L-methionine + ATP + H2O = S-adenosyl-L-methionine + phosphate + diphosphate. It participates in amino-acid biosynthesis; S-adenosyl-L-methionine biosynthesis; S-adenosyl-L-methionine from L-methionine: step 1/1. Catalyzes the formation of S-adenosylmethionine from methionine and ATP. The reaction comprises two steps that are both catalyzed by the same enzyme: formation of S-adenosylmethionine (AdoMet) and triphosphate, and subsequent hydrolysis of the triphosphate. In Suaeda salsa (Seepweed), this protein is S-adenosylmethionine synthase 2 (METK2).